Reading from the N-terminus, the 524-residue chain is 3-epi-6-deoxocathasterone 23-monooxygenase CYP90C1 (524 aa).

The chain crosses the membrane as a helical span at residues 25–45 (YLVAGFLVLTAGILLRPWLWL). Position 463 (C463) interacts with heme.

The protein belongs to the cytochrome P450 family. Heme serves as cofactor. In terms of tissue distribution, widely expressed.

Its subcellular location is the endoplasmic reticulum membrane. It carries out the reaction 3-epi-6-deoxocathasterone + reduced [NADPH--hemoprotein reductase] + O2 = 6-deoxotyphasterol + oxidized [NADPH--hemoprotein reductase] + H2O + H(+). It catalyses the reaction (22S,24R)-22-hydroxy-5alpha-ergostan-3-one + reduced [NADPH--hemoprotein reductase] + O2 = 3-dehydro-6-deoxoteasterone + oxidized [NADPH--hemoprotein reductase] + H2O + H(+). Its pathway is plant hormone biosynthesis; brassinosteroid biosynthesis. Involved in brassinosteroid (BR) biosynthesis. Converts typhasterol (TY) to cathasterone (CS) and 6-deoxotyphasterol (6-deoxoTY) to 6-deoxocathasterone (6-deoxoCT). C-23 hydroxylase that converts directly (22S,24R)-22-hydroxy-5-alpha-ergostan-3-one and 3-epi-6-deoxocathasterone to 3-dehydro-6-deoxoteasterone (6-deoxo3DT, 6-deoxo3DHT) and 6-deoxotyphasterol (6-deoxoTY), respectively. These C-23 hydroxylation shortcuts bypass campestanol, 6-deoxocathasterone, and 6-deoxoteasterone (6-deoxoTE). Also catalyzes the conversion of cathasterone to teasterone (TE), (22S,24R)-22-hydroxyergost-4-en-3-one (22-OH-4-en-3-one) to (22R,23R)-22,23-dihydroxy-campest-4-en-3-one (22,23-diOH-4-en-3-one) and (22S)-22-hydroxycampesterol (22-OHCR) to (22R,23R)-22,23-dihydroxycampesterol (22,23-diOHCR). Required for the regulation of polar elongation of leaf cells. Required for the longitudinal elongation of floral organs. The polypeptide is 3-epi-6-deoxocathasterone 23-monooxygenase CYP90C1 (Arabidopsis thaliana (Mouse-ear cress)).